The chain runs to 364 residues: Transcription factor SPEECHLESS (364 aa).

The tract at residues 35–109 (GEISPTAAST…QKMSHVTVER (75 aa)) is disordered. Ser-38 carries the phosphoserine; by ASK7 modification. Phosphothreonine; by ASK7 is present on Thr-40. Polar residues predominate over residues 40-53 (TAASTPKDGTTSSK). Ser-43 carries the phosphoserine; by ASK7 modification. Phosphothreonine; by ASK7 is present on Thr-44. Position 65 is a phosphoserine; by ASK7 (Ser-65). Positions 79 to 92 (EDEEEEDGDGEAEE) are enriched in acidic residues. Residues 99–112 (QQKMSHVTVERNRR) form a basic motif region. The bHLH domain occupies 99–150 (QQKMSHVTVERNRRKQMNEHLTVLRSLMPCFYVKRGDQASIIGGVVEYISEL). The tract at residues 113-150 (KQMNEHLTVLRSLMPCFYVKRGDQASIIGGVVEYISEL) is helix-loop-helix motif. Phosphoserine; by ASK7 is present on Ser-171. A disordered region spans residues 171–227 (SPRVVPSPRPSPPVLSPRKPPLSPRINHHQIHHHLLLPPISPRTPQPTSPYRAIPPQ). Residues 175 to 193 (VPSPRPSPPVLSPRKPPLS) show a composition bias toward pro residues. Ser-177 is subject to Phosphoserine; by ASK7, MPK3 and MPK6. Ser-181 bears the Phosphoserine; by ASK7 mark. A Phosphoserine; by CDKA-1, ASK7, MPK3 and MPK6 modification is found at Ser-186. Position 193 is a phosphoserine; by MPK3 and MPK6 (Ser-193). The segment covering 196-205 (INHHQIHHHL) has biased composition (basic residues). Residues 209–218 (PISPRTPQPT) show a composition bias toward pro residues. At Ser-211 the chain carries Phosphoserine; by MPK3 and MPK6. The residue at position 214 (Thr-214) is a Phosphothreonine; by ASK7, MPK3 and MPK6. Phosphoserine; by ASK7, MPK3 and MPK6 is present on Ser-219.

Homodimer. Forms dimers with SCRM and SCRM2. May interact with CDKA-1. In terms of processing, phosphorylated by ASK7/BIN2 and ASK3/SK12; this post-translational modification inhibits activity and limit epidermal cell proliferation. Phosphorylation by MPK3 and MPK6 leads to the inhibition of stomatal fate and to degradation. Stabilized by CDKA-1-mediated phosphorylation at Ser-186 which promotes stomatal development. In terms of tissue distribution, expressed in developing leaf epidermis. Reduced accumulation in the stomatal lineage ground cells (SLGCs) where BASL is polarized in the cell cortex. Observed in small cells of non-protruding hypocotyl cell files and of developing cotyledon epidermis. Restricted to meristemoids (stomatal precursor cell) in leaves epidermis, mostly in dividing cells of non-protruding cell files.

It localises to the nucleus. With respect to regulation, negatively regulated through phosphorylation by the MAPK module. Activity is constrained by polarized BASL in stomatal lineage ground cells (SLGCs) undergoing ACD. Its function is as follows. Transcription factor acting as an integration node for stomata and brassinosteroid (BR) signaling pathways to control stomatal initiation and development. Activates transcription when in the presence of SCRM/ICE1. Functions as a dimer with SCRM or SCRM2 during stomatal initiation. Required for the initiation, the spacing and the formation of stomata, by promoting the first asymmetric cell divisions. Together with FMA and MUTE, modulates the stomata formation. Involved in the regulation of growth reduction under osmotic stress (e.g. mannitol), associated with a quick decrease of meristemoid mother cells (MMCs) number lower stomatal index and density. The sequence is that of Transcription factor SPEECHLESS from Arabidopsis thaliana (Mouse-ear cress).